A 116-amino-acid chain; its full sequence is Large ribosomal subunit protein bL17 (116 aa).

This sequence belongs to the bacterial ribosomal protein bL17 family. In terms of assembly, part of the 50S ribosomal subunit. Contacts protein L32.

The chain is Large ribosomal subunit protein bL17 from Prochlorococcus marinus (strain MIT 9515).